Here is a 485-residue protein sequence, read N- to C-terminus: Adenosylhomocysteinase (485 aa).

3 residues coordinate substrate: Thr64, Asp139, and Glu205. An NAD(+)-binding site is contributed by 206–208 (TTT). Substrate-binding residues include Lys235 and Asp239. NAD(+) is bound by residues Asn240, 269-274 (GYGDVG), Glu292, Asn327, 348-350 (IGH), and Asn397.

The protein belongs to the adenosylhomocysteinase family. In terms of assembly, homotetramer. The cofactor is NAD(+). Mainly in floral buds and stems.

It catalyses the reaction S-adenosyl-L-homocysteine + H2O = L-homocysteine + adenosine. It participates in amino-acid biosynthesis; L-homocysteine biosynthesis; L-homocysteine from S-adenosyl-L-homocysteine: step 1/1. Adenosylhomocysteine is a competitive inhibitor of S-adenosyl-L-methionine-dependent methyl transferase reactions; therefore adenosylhomocysteinase may play a key role in the control of methylations via regulation of the intracellular concentration of adenosylhomocysteine. The protein is Adenosylhomocysteinase (SAHH) of Petroselinum crispum (Parsley).